A 478-amino-acid chain; its full sequence is Argininosuccinate synthase (478 aa).

ATP-binding positions include 17-25 and A43; that span reads AFSGGLDTS. Y99 provides a ligand contact to L-citrulline. Positions 129 and 131 each coordinate ATP. Residues T131, N135, and D136 each contribute to the L-aspartate site. N135 contributes to the L-citrulline binding site. Residue D136 coordinates ATP. The L-citrulline site is built by R139 and S192. ATP is bound at residue D194. L-citrulline-binding residues include T201, E203, and E280.

This sequence belongs to the argininosuccinate synthase family. Type 2 subfamily. As to quaternary structure, homotetramer.

The protein localises to the cytoplasm. It carries out the reaction L-citrulline + L-aspartate + ATP = 2-(N(omega)-L-arginino)succinate + AMP + diphosphate + H(+). Its pathway is amino-acid biosynthesis; L-arginine biosynthesis; L-arginine from L-ornithine and carbamoyl phosphate: step 2/3. The polypeptide is Argininosuccinate synthase (Leifsonia xyli subsp. xyli (strain CTCB07)).